The chain runs to 276 residues: Formamidopyrimidine-DNA glycosylase (276 aa).

Catalysis depends on P2, which acts as the Schiff-base intermediate with DNA. The active-site Proton donor is the E3. Residue K58 is the Proton donor; for beta-elimination activity of the active site. Residues H92, R111, and R153 each coordinate DNA. An FPG-type zinc finger spans residues 238 to 272; it reads TVYGRERQNCLNCSSTIIKTKHSGRSTFYCRTCQY. R262 acts as the Proton donor; for delta-elimination activity in catalysis.

Belongs to the FPG family. Monomer. Requires Zn(2+) as cofactor.

It catalyses the reaction Hydrolysis of DNA containing ring-opened 7-methylguanine residues, releasing 2,6-diamino-4-hydroxy-5-(N-methyl)formamidopyrimidine.. The enzyme catalyses 2'-deoxyribonucleotide-(2'-deoxyribose 5'-phosphate)-2'-deoxyribonucleotide-DNA = a 3'-end 2'-deoxyribonucleotide-(2,3-dehydro-2,3-deoxyribose 5'-phosphate)-DNA + a 5'-end 5'-phospho-2'-deoxyribonucleoside-DNA + H(+). Involved in base excision repair of DNA damaged by oxidation or by mutagenic agents. Acts as a DNA glycosylase that recognizes and removes damaged bases. Has a preference for oxidized purines, such as 7,8-dihydro-8-oxoguanine (8-oxoG). Has AP (apurinic/apyrimidinic) lyase activity and introduces nicks in the DNA strand. Cleaves the DNA backbone by beta-delta elimination to generate a single-strand break at the site of the removed base with both 3'- and 5'-phosphates. This chain is Formamidopyrimidine-DNA glycosylase, found in Rickettsia felis (strain ATCC VR-1525 / URRWXCal2) (Rickettsia azadi).